Here is a 565-residue protein sequence, read N- to C-terminus: NAD-dependent malic enzyme (565 aa).

Residue Tyr104 is the Proton donor of the active site. Arg157 lines the NAD(+) pocket. Lys175 functions as the Proton acceptor in the catalytic mechanism. A divalent metal cation is bound by residues Glu246, Asp247, and Asp270. 2 residues coordinate NAD(+): Asp270 and Asn418.

It belongs to the malic enzymes family. Homotetramer. It depends on Mg(2+) as a cofactor. Requires Mn(2+) as cofactor.

It carries out the reaction (S)-malate + NAD(+) = pyruvate + CO2 + NADH. The enzyme catalyses oxaloacetate + H(+) = pyruvate + CO2. This is NAD-dependent malic enzyme from Escherichia coli O9:H4 (strain HS).